The following is a 257-amino-acid chain: Methylthioribulose-1-phosphate dehydratase (257 aa).

The tract at residues 1–33 (MVSSQEKMASISDIIQKDEDSGSEKTESQDKEH) is disordered. A compositionally biased stretch (basic and acidic residues) spans 15–33 (IQKDEDSGSEKTESQDKEH). Residue C107 coordinates substrate. The Zn(2+) site is built by H125 and H127. Residue E149 is the Proton donor/acceptor of the active site. A Zn(2+)-binding site is contributed by H205.

This sequence belongs to the aldolase class II family. MtnB subfamily. It depends on Zn(2+) as a cofactor.

It localises to the cytoplasm. It carries out the reaction 5-(methylsulfanyl)-D-ribulose 1-phosphate = 5-methylsulfanyl-2,3-dioxopentyl phosphate + H2O. It functions in the pathway amino-acid biosynthesis; L-methionine biosynthesis via salvage pathway; L-methionine from S-methyl-5-thio-alpha-D-ribose 1-phosphate: step 2/6. In terms of biological role, catalyzes the dehydration of methylthioribulose-1-phosphate (MTRu-1-P) into 2,3-diketo-5-methylthiopentyl-1-phosphate (DK-MTP-1-P). Functions in the methionine salvage pathway. May play a role in apoptosis. The polypeptide is Methylthioribulose-1-phosphate dehydratase (Esox lucius (Northern pike)).